The following is a 443-amino-acid chain: Threonine/serine transporter TdcC (443 aa).

The next 11 membrane-spanning stretches (helical) occupy residues 22-42 (TTWT…FFPI), 44-64 (AGFG…PIAF), 97-117 (GVVI…IYGV), 140-160 (FVAL…KDLM), 163-183 (VMSY…LSLI), 207-227 (ILVT…FSPI), 259-279 (ASML…FTLS), 319-339 (ASII…LGTL), 366-386 (ISMI…PNIL), 389-409 (IEAM…MYAI), and 423-443 (DNVF…YKLF).

This sequence belongs to the amino acid/polyamine transporter 2 family. SdaC/TdcC subfamily.

The protein localises to the cell inner membrane. It carries out the reaction L-threonine(in) + H(+)(in) = L-threonine(out) + H(+)(out). It catalyses the reaction L-serine(in) + H(+)(in) = L-serine(out) + H(+)(out). In terms of biological role, involved in the import of threonine and serine into the cell, with the concomitant import of a proton (symport system). The chain is Threonine/serine transporter TdcC from Salmonella paratyphi B (strain ATCC BAA-1250 / SPB7).